Reading from the N-terminus, the 398-residue chain is Inositol polyphosphate 5-phosphatase (398 aa).

The protein belongs to the inositol 1,4,5-trisphosphate 5-phosphatase type II family. As to expression, expressed in tail, cilia, dendrites, axon and male head.

The protein resides in the cytoplasm. Its function is as follows. Dephosphorylates a number of phosphatidylinositols. Controls the cellular levels and subcellular distribution of phosphatidylinositol 3,5-bisphosphate and phosphatidylinositol 3,4,5-trisphosphate. Has a role in sperm activation and motility. Influences the localization of the transient receptor potential polycystin (TRPP) complex proteins lov-1 and pkd-2. This chain is Inositol polyphosphate 5-phosphatase, found in Caenorhabditis elegans.